Here is a 233-residue protein sequence, read N- to C-terminus: Lipoprotein-releasing system ATP-binding protein LolD (233 aa).

The ABC transporter domain maps to 6–233 (LQCDNLCKRY…TAELSLMGAE (228 aa)). 42–49 (GSSGSGKS) is an ATP binding site.

The protein belongs to the ABC transporter superfamily. Lipoprotein translocase (TC 3.A.1.125) family. As to quaternary structure, the complex is composed of two ATP-binding proteins (LolD) and two transmembrane proteins (LolC and LolE).

It is found in the cell inner membrane. Its function is as follows. Part of the ABC transporter complex LolCDE involved in the translocation of mature outer membrane-directed lipoproteins, from the inner membrane to the periplasmic chaperone, LolA. Responsible for the formation of the LolA-lipoprotein complex in an ATP-dependent manner. The protein is Lipoprotein-releasing system ATP-binding protein LolD of Shigella flexneri.